Reading from the N-terminus, the 1653-residue chain is Protein TOPAZ1 (1653 aa).

Disordered stretches follow at residues Met1–Val94, Tyr284–Lys303, and Ile415–Glu442. Over residues Gly63 to Lys78 the composition is skewed to basic and acidic residues. Basic and acidic residues predominate over residues Ser423 to Glu442.

As to expression, restricted to testis, where it localizes to germ cells.

It localises to the cytoplasm. The protein resides in the cytosol. Functionally, important for normal spermatogenesis and male fertility. Specifically required for progression to the post-meiotic stages of spermatocyte development. Seems to be necessary for normal expression levels of a number of testis-expressed gene transcripts, although its role in this process is unclear. In Mus musculus (Mouse), this protein is Protein TOPAZ1.